Here is a 188-residue protein sequence, read N- to C-terminus: Putative protein SSX6 (188 aa).

2 disordered regions span residues 1–22 (MNGD…EKRS) and 74–188 (KRAT…EDDK). In terms of domain architecture, KRAB-related spans 20 to 83 (KRSKAFDDIA…KRATDSQRND (64 aa)). Basic and acidic residues-rich tracts occupy residues 75-96 (RATD…EVER) and 112-122 (MPEKPAEEGSD). Residue serine 123 is modified to Phosphoserine. The segment covering 147-156 (SSEKIHERSG) has biased composition (basic and acidic residues). Residues 157-170 (PKRGKHAWTHRLRE) are compositionally biased toward basic residues. Residues 179 to 188 (EISDPEEDDK) show a composition bias toward acidic residues.

This sequence belongs to the SSX family. Not detected in any normal tissues. Expressed in a melanoma cell line.

Functionally, could act as a modulator of transcription. This chain is Putative protein SSX6, found in Homo sapiens (Human).